Here is a 169-residue protein sequence, read N- to C-terminus: Holo-[acyl-carrier-protein] synthase (169 aa).

The Mg(2+) site is built by aspartate 8 and glutamate 50.

Belongs to the P-Pant transferase superfamily. AcpS family. Requires Mg(2+) as cofactor.

It localises to the cytoplasm. The catalysed reaction is apo-[ACP] + CoA = holo-[ACP] + adenosine 3',5'-bisphosphate + H(+). In terms of biological role, transfers the 4'-phosphopantetheine moiety from coenzyme A to a Ser of acyl-carrier-protein. The polypeptide is Holo-[acyl-carrier-protein] synthase (Thermotoga maritima (strain ATCC 43589 / DSM 3109 / JCM 10099 / NBRC 100826 / MSB8)).